We begin with the raw amino-acid sequence, 251 residues long: Flap endonuclease Xni (251 aa).

D104 provides a ligand contact to Mg(2+). The 90-residue stretch at 160–249 folds into the 5'-3' exonuclease domain; it reads VQPQQLPDYW…IDGNLQQLRL (90 aa). K(+) is bound by residues L171, A172, P180, V182, and I185. Positions 184–189 are interaction with DNA; it reads GIGPKS.

The protein belongs to the Xni family. It depends on Mg(2+) as a cofactor. Requires K(+) as cofactor.

Its function is as follows. Has flap endonuclease activity. During DNA replication, flap endonucleases cleave the 5'-overhanging flap structure that is generated by displacement synthesis when DNA polymerase encounters the 5'-end of a downstream Okazaki fragment. The sequence is that of Flap endonuclease Xni from Shigella flexneri serotype 5b (strain 8401).